Consider the following 482-residue polypeptide: tRNA sulfurtransferase (482 aa).

The THUMP domain occupies 61-165; it reads LAIRDALTRI…DDRLLLIKGR (105 aa). ATP is bound by residues 183–184, K265, G287, and Q296; that span reads LI. A disulfide bridge connects residues C344 and C456. The region spanning 404–482 is the Rhodanese domain; it reads FGPNDVILDI…GFNNVKVYRP (79 aa). The active-site Cysteine persulfide intermediate is C456.

This sequence belongs to the ThiI family.

It is found in the cytoplasm. It carries out the reaction [ThiI sulfur-carrier protein]-S-sulfanyl-L-cysteine + a uridine in tRNA + 2 reduced [2Fe-2S]-[ferredoxin] + ATP + H(+) = [ThiI sulfur-carrier protein]-L-cysteine + a 4-thiouridine in tRNA + 2 oxidized [2Fe-2S]-[ferredoxin] + AMP + diphosphate. The enzyme catalyses [ThiS sulfur-carrier protein]-C-terminal Gly-Gly-AMP + S-sulfanyl-L-cysteinyl-[cysteine desulfurase] + AH2 = [ThiS sulfur-carrier protein]-C-terminal-Gly-aminoethanethioate + L-cysteinyl-[cysteine desulfurase] + A + AMP + 2 H(+). Its pathway is cofactor biosynthesis; thiamine diphosphate biosynthesis. Its function is as follows. Catalyzes the ATP-dependent transfer of a sulfur to tRNA to produce 4-thiouridine in position 8 of tRNAs, which functions as a near-UV photosensor. Also catalyzes the transfer of sulfur to the sulfur carrier protein ThiS, forming ThiS-thiocarboxylate. This is a step in the synthesis of thiazole, in the thiamine biosynthesis pathway. The sulfur is donated as persulfide by IscS. The chain is tRNA sulfurtransferase from Escherichia coli (strain 55989 / EAEC).